The following is a 216-amino-acid chain: Kynurenine formamidase (216 aa).

Trp-25 lines the substrate pocket. 3 residues coordinate Zn(2+): His-55, His-59, and Asp-61. Catalysis depends on His-65, which acts as the Proton donor/acceptor. 2 residues coordinate Zn(2+): His-167 and Glu-179.

This sequence belongs to the Cyclase 1 superfamily. KynB family. In terms of assembly, homodimer. It depends on Zn(2+) as a cofactor.

The enzyme catalyses N-formyl-L-kynurenine + H2O = L-kynurenine + formate + H(+). Its pathway is amino-acid degradation; L-tryptophan degradation via kynurenine pathway; L-kynurenine from L-tryptophan: step 2/2. In terms of biological role, catalyzes the hydrolysis of N-formyl-L-kynurenine to L-kynurenine, the second step in the kynurenine pathway of tryptophan degradation. The polypeptide is Kynurenine formamidase (Cupriavidus taiwanensis (strain DSM 17343 / BCRC 17206 / CCUG 44338 / CIP 107171 / LMG 19424 / R1) (Ralstonia taiwanensis (strain LMG 19424))).